The following is a 237-amino-acid chain: UPF0053 protein HI_0056 (237 aa).

7 helical membrane passes run 12-32, 49-69, 90-110, 126-146, 151-171, 188-208, and 210-230; these read ISLVTLAALEIVLGIDNIIFI, ILGLALAMLTRILLLMSLAWI, ILLIGGLFLIIKSSGEIKEAI, YLGVLIQIAVLDIVFSLDSVI, MASHLPVMILAIMIAVGVMMF, ILALAFLVLVGISLIAESLDI, and IPKGYIYFAMGFSVVVEMINI.

It belongs to the UPF0053 family.

The protein resides in the cell membrane. The protein is UPF0053 protein HI_0056 of Haemophilus influenzae (strain ATCC 51907 / DSM 11121 / KW20 / Rd).